Reading from the N-terminus, the 137-residue chain is Small ribosomal subunit protein bS6 (137 aa).

It belongs to the bacterial ribosomal protein bS6 family.

Binds together with bS18 to 16S ribosomal RNA. This is Small ribosomal subunit protein bS6 from Sulfurimonas denitrificans (strain ATCC 33889 / DSM 1251) (Thiomicrospira denitrificans (strain ATCC 33889 / DSM 1251)).